Reading from the N-terminus, the 257-residue chain is UPF0246 protein Daro_2893 (257 aa).

This sequence belongs to the UPF0246 family.

The chain is UPF0246 protein Daro_2893 from Dechloromonas aromatica (strain RCB).